A 57-amino-acid chain; its full sequence is Myrmicitoxin(1)-Pm7a (57 aa).

Positions 1-23 (MMKIIYAFLLIAVVAFMGSGIMA) are cleaved as a signal peptide. Positions 24–31 (EPLAEAIA) are excised as a propeptide.

Belongs to the formicidae venom clade 4 family. In terms of tissue distribution, expressed by the venom gland.

The protein resides in the secreted. Functionally, probable neurotoxin. The protein is Myrmicitoxin(1)-Pm7a of Pogonomyrmex maricopa (Maricopa harvester ant).